Reading from the N-terminus, the 320-residue chain is uncharacterized protein (320 aa).

The next 7 helical transmembrane spans lie at 107-127, 131-151, 169-189, 200-220, 228-248, 260-280, and 299-319; these read LSKENMLMLILSTIVAIAGIY, VALLIASMIIAPLLGPNIALS, LIAELIFVIILSMIAGHYLPI, ITLDFWSIIIALSAGIAGSLS, IAVGVMIAIALLPPLAVFGLL, ALILFLINMIAINLSAIVIFS, and TLYAILLWVTLFIAIFVLIIY.

The protein resides in the cell membrane. This is an uncharacterized protein from Methanocaldococcus jannaschii (strain ATCC 43067 / DSM 2661 / JAL-1 / JCM 10045 / NBRC 100440) (Methanococcus jannaschii).